The primary structure comprises 451 residues: Bacteriochlorophyllide d C-8(2)-methyltransferase (451 aa).

Residues 1–118 enclose the B12-binding domain; that stretch reads MDDDSNQKPL…DDVANNRLKE (118 aa). Residues 148 to 377 form the Radical SAM core domain; that stretch reads VDGTKSIPIY…ALHLVIKSDR (230 aa). Residues C162, C166, and C169 each contribute to the [4Fe-4S] cluster site.

The protein belongs to the radical SAM superfamily. [4Fe-4S] cluster serves as cofactor.

It is found in the cytoplasm. It catalyses the reaction 8,12-diethyl-3-vinylbacteriochlorophyllide d + S-adenosyl-L-methionine = 12-ethyl-8-propyl-3-vinylbacteriochlorophyllide d + S-adenosyl-L-homocysteine + H(+). The enzyme catalyses 12-ethyl-8-propyl-3-vinylbacteriochlorophyllide d + S-adenosyl-L-methionine = 12-ethyl-8-isobutyl-3-vinylbacteriochlorophyllide d + S-adenosyl-L-homocysteine + H(+). It functions in the pathway porphyrin-containing compound metabolism; bacteriochlorophyll biosynthesis (light-independent). Functionally, involved in the biosynthesis of the major light-harvesting pigment bacteriochlorophyll c (BChlc), which confers a significant competitive advantage to green sulfur bacteria living at limiting red and near-infrared light intensities. BchQ is a methyltransferase that adds two consecutive methyl groups to the ethyl carbon at the C-8(2) position of 8,12-diethyl-3-vinylbacteriochlorophyllide d to yield 12-ethyl-8-isobutyl-3-vinylbacteriochlorophyllide d. This is Bacteriochlorophyllide d C-8(2)-methyltransferase from Chlorobaculum tepidum (strain ATCC 49652 / DSM 12025 / NBRC 103806 / TLS) (Chlorobium tepidum).